Reading from the N-terminus, the 992-residue chain is Probable translation initiation factor IF-2 (992 aa).

The region spanning 96–220 (KNWHGVTVTP…LSLALLRFGI (125 aa)) is the DOD-type homing endonuclease domain. The region spanning 399 to 616 (TTETHNFIAN…LIAGLSQRYL (218 aa)) is the tr-type G domain. GTP is bound by residues 472-476 (DTPGH) and 526-529 (NKID).

It belongs to the TRAFAC class translation factor GTPase superfamily. Classic translation factor GTPase family. IF-2 subfamily. Post-translationally, this protein undergoes a protein self splicing that involves a post-translational excision of the intervening region (intein) followed by peptide ligation.

Its function is as follows. Function in general translation initiation by promoting the binding of the formylmethionine-tRNA to ribosomes. Seems to function along with eIF-2. The sequence is that of Probable translation initiation factor IF-2 (infB) from Pyrococcus abyssi (strain GE5 / Orsay).